A 428-amino-acid chain; its full sequence is Gamma-glutamyl phosphate reductase (428 aa).

It belongs to the gamma-glutamyl phosphate reductase family.

It localises to the cytoplasm. It carries out the reaction L-glutamate 5-semialdehyde + phosphate + NADP(+) = L-glutamyl 5-phosphate + NADPH + H(+). Its pathway is amino-acid biosynthesis; L-proline biosynthesis; L-glutamate 5-semialdehyde from L-glutamate: step 2/2. Functionally, catalyzes the NADPH-dependent reduction of L-glutamate 5-phosphate into L-glutamate 5-semialdehyde and phosphate. The product spontaneously undergoes cyclization to form 1-pyrroline-5-carboxylate. The chain is Gamma-glutamyl phosphate reductase from Picosynechococcus sp. (strain ATCC 27264 / PCC 7002 / PR-6) (Agmenellum quadruplicatum).